A 199-amino-acid chain; its full sequence is MQEFKQHTGLAVPLDSANVDTDQIIPKQFLQRVSKLGFGQNLFHDWRFLDEAGTQPNPEFVLNFPRYKGASILLARENFGNGSSREHAPWALADYGLKAVIAPSFADIFYGNSLNNGLLVVRLKDDEVDALFKLVEANEGQNITVDLEAKEVRAADYCFKFEIDDFRRYCIMNGLDNIGLTLQHADAIDAYEAKQPVWL.

This sequence belongs to the LeuD family. LeuD type 1 subfamily. In terms of assembly, heterodimer of LeuC and LeuD.

It carries out the reaction (2R,3S)-3-isopropylmalate = (2S)-2-isopropylmalate. It functions in the pathway amino-acid biosynthesis; L-leucine biosynthesis; L-leucine from 3-methyl-2-oxobutanoate: step 2/4. Catalyzes the isomerization between 2-isopropylmalate and 3-isopropylmalate, via the formation of 2-isopropylmaleate. This chain is 3-isopropylmalate dehydratase small subunit, found in Tolumonas auensis (strain DSM 9187 / NBRC 110442 / TA 4).